Consider the following 516-residue polypeptide: ADP-ribosylation factor GTPase-activating protein 3 (516 aa).

In terms of domain architecture, Arf-GAP spans 10-126; sequence LTIFKRLRSV…IKSLASQATR (117 aa). The segment at 25 to 48 adopts a C4-type zinc-finger fold; that stretch reads CFDCGAKNPSWASITYGVFLCIDC. The disordered stretch occupies residues 170–199; it reads AEPSSLTSRPAETTLENNEGGQEQGPCVEG. Residues 173–190 are compositionally biased toward polar residues; the sequence is SSLTSRPAETTLENNEGG. Ser231 carries the phosphoserine modification. Residues 243–264 are a coiled coil; sequence NEIEKQAQAADKMKEQEDLAKA. 4 positions are modified to phosphoserine: Ser270, Ser274, Ser331, and Ser370. A disordered region spans residues 393 to 417; the sequence is TTGYSDRPTARHKPDYEPVENTDEA. Phosphoserine is present on residues Ser428, Ser451, Ser453, Ser455, Ser457, and Ser458.

Its subcellular location is the cytoplasm. It is found in the golgi apparatus membrane. GAP activity stimulated by phosphatidylinositol 4,5-bisphosphate (PIP2). In terms of biological role, GTPase-activating protein (GAP) for ADP ribosylation factor 1 (ARF1). Hydrolysis of ARF1-bound GTP may lead to dissociation of coatomer from Golgi-derived membranes to allow fusion with target membranes. The polypeptide is ADP-ribosylation factor GTPase-activating protein 3 (Pongo abelii (Sumatran orangutan)).